A 227-amino-acid polypeptide reads, in one-letter code: Ribose-5-phosphate isomerase A (227 aa).

Residues 26–29 (TGST), 82–85 (DGAD), and 95–98 (KGGG) each bind substrate. The Proton acceptor role is filled by Glu-104. Residue Lys-122 coordinates substrate.

It belongs to the ribose 5-phosphate isomerase family. In terms of assembly, homodimer.

The catalysed reaction is aldehydo-D-ribose 5-phosphate = D-ribulose 5-phosphate. It participates in carbohydrate degradation; pentose phosphate pathway; D-ribose 5-phosphate from D-ribulose 5-phosphate (non-oxidative stage): step 1/1. Functionally, catalyzes the reversible conversion of ribose-5-phosphate to ribulose 5-phosphate. This chain is Ribose-5-phosphate isomerase A, found in Streptococcus pyogenes serotype M1.